The following is an 80-amino-acid chain: Large ribosomal subunit protein bL31B (80 aa).

It belongs to the bacterial ribosomal protein bL31 family. Type B subfamily. In terms of assembly, part of the 50S ribosomal subunit.

This is Large ribosomal subunit protein bL31B from Streptococcus sanguinis (strain SK36).